A 321-amino-acid chain; its full sequence is Porphobilinogen deaminase (321 aa).

Position 243 is an S-(dipyrrolylmethanemethyl)cysteine (Cys-243).

It belongs to the HMBS family. In terms of assembly, monomer. Dipyrromethane is required as a cofactor.

It carries out the reaction 4 porphobilinogen + H2O = hydroxymethylbilane + 4 NH4(+). Its pathway is porphyrin-containing compound metabolism; protoporphyrin-IX biosynthesis; coproporphyrinogen-III from 5-aminolevulinate: step 2/4. In terms of biological role, tetrapolymerization of the monopyrrole PBG into the hydroxymethylbilane pre-uroporphyrinogen in several discrete steps. The chain is Porphobilinogen deaminase from Histophilus somni (strain 129Pt) (Haemophilus somnus).